The sequence spans 1043 residues: P3N-PIPO polyprotein (1043 aa).

The Peptidase S30 domain occupies 219–362 (KMNDQGVDML…RTMSHKIVHF (144 aa)). Active-site for P1 proteinase activity residues include H270, D279, and S313. The short motif at 414 to 417 (KITC) is the Involved in interaction with stylet and aphid transmission element. The Involved in virions binding and aphid transmission signature appears at 672–674 (PTK). A Peptidase C6 domain is found at 698–820 (MYIAKEGYCY…ESSLKHYRVG (123 aa)). Catalysis depends on for helper component proteinase activity residues C706 and H779.

Belongs to the potyviridae P3N-PIPO polyprotein family. Interacts (via PIPO domain) with host PCaP1 protein; this interaction may help to anchor the movement complex to the plasma membrane from which the complex could move to the plasmodesmata. Post-translationally, potyviral RNA is expressed as two polyproteins which undergo post-translational proteolytic processing. Genome polyprotein is processed by NIa-pro, P1 and HC-pro proteinases resulting in the production of at least ten individual proteins. P3N-PIPO is cleaved by P1 and HC-pro proteinases resulting in the production of three individual proteins. The P1 proteinase and the HC-pro cleave only their respective C-termini autocatalytically.

The protein resides in the host cell junction. It localises to the host plasmodesma. It catalyses the reaction Hydrolyzes a Gly-|-Gly bond at its own C-terminus, commonly in the sequence -Tyr-Xaa-Val-Gly-|-Gly, in the processing of the potyviral polyprotein.. Cysteine protease that cleaves a Gly-Gly dipeptide at its own C-terminus. Required for aphid transmission and also has proteolytic activity. Interacts with virions and aphid stylets. Acts as a suppressor of RNA-mediated gene silencing, also known as post-transcriptional gene silencing (PTGS), a mechanism of plant viral defense that limits the accumulation of viral RNAs. May have RNA-binding activity. In terms of biological role, allows efficient cell to cell propagation, by bypassing the host cell wall barrier. Transports viral genome to neighboring plant cells directly through plasmosdesmata, without any budding. The sequence is that of P3N-PIPO polyprotein from Alliaria petiolata (Garlic mustard).